Reading from the N-terminus, the 214-residue chain is Single-pass membrane and coiled-coil domain-containing protein 1 (214 aa).

Positions 5 to 40 (TTTLISLKEAMKRVDNKLRALDTQFKELDVTKDNLT) form a coiled coil. A helical membrane pass occupies residues 59 to 81 (IWTAALALGFTSMELNIVYSYVI). Positions 193-214 (KQAQDPENSRAPLKELMPPVKD) are disordered.

It is found in the membrane. The chain is Single-pass membrane and coiled-coil domain-containing protein 1 (Smco1) from Mus musculus (Mouse).